The primary structure comprises 108 residues: Trp operon repressor homolog (108 aa).

A DNA-binding region spans residues 59-82; the sequence is QRQISQLLGVGVATITRGSNELKS.

It belongs to the TrpR family. Homodimer.

Its subcellular location is the cytoplasm. Functionally, this protein is an aporepressor. When complexed with L-tryptophan it binds the operator region of the trp operon and prevents the initiation of transcription. The sequence is that of Trp operon repressor homolog from Aliivibrio salmonicida (strain LFI1238) (Vibrio salmonicida (strain LFI1238)).